The sequence spans 173 residues: Shikimate kinase (173 aa).

Glycine 14–threonine 19 provides a ligand contact to ATP. Position 18 (serine 18) interacts with Mg(2+). Substrate is bound by residues aspartate 36, arginine 60, and glycine 82. Residue arginine 120 participates in ATP binding. Substrate is bound at residue arginine 140. Glutamine 157 is an ATP binding site.

Belongs to the shikimate kinase family. As to quaternary structure, monomer. Mg(2+) is required as a cofactor.

Its subcellular location is the cytoplasm. It carries out the reaction shikimate + ATP = 3-phosphoshikimate + ADP + H(+). Its pathway is metabolic intermediate biosynthesis; chorismate biosynthesis; chorismate from D-erythrose 4-phosphate and phosphoenolpyruvate: step 5/7. Catalyzes the specific phosphorylation of the 3-hydroxyl group of shikimic acid using ATP as a cosubstrate. The sequence is that of Shikimate kinase from Buchnera aphidicola subsp. Schizaphis graminum (strain Sg).